We begin with the raw amino-acid sequence, 1263 residues long: Histone-lysine N-methyltransferase EHMT2 (1263 aa).

2 disordered regions span residues 1-314 (MRGL…LEEW) and 332-439 (DERV…EYME). Residues 26–39 (GRGRGGAHRGRGRP) are compositionally biased toward basic residues. Arginine 40 carries the post-translational modification Asymmetric dimethylarginine. Residues 83–95 (LEKEPRGAAERVH) are compositionally biased toward basic and acidic residues. Serine 97 is subject to Phosphoserine. At threonine 101 the chain carries Phosphothreonine. A phosphoserine mark is found at serine 104 and serine 193. Lysine 239 is modified (N6,N6,N6-trimethyllysine; by EHMT2; alternate). Lysine 239 carries the N6,N6-dimethyllysine; by EHMT2; alternate modification. Over residues 252–270 (PEKRPPEVQHFRMSDDMHL) the composition is skewed to basic and acidic residues. Residues lysine 272 and lysine 282 each participate in a glycyl lysine isopeptide (Lys-Gly) (interchain with G-Cter in SUMO2) cross-link. Serine 285, serine 294, and serine 298 each carry phosphoserine. Basic and acidic residues-rich tracts occupy residues 302-312 (ILEKGEPRPLE) and 332-343 (DERVDSDSKSEV). The span at 350–380 (LSEEEEEEEEEEEEEEEEEEEEEEEEEDEES) shows a compositional bias: acidic residues. The segment covering 391–400 (GRRKAKKKWR) has biased composition (basic residues). A phosphoserine mark is found at serine 403, serine 465, and serine 466. Threonine 608 carries the phosphothreonine modification. Residues 621–647 (LAHDAPGRADTSQPSARMRGHGEPRRP) form a disordered region. A Glycyl lysine isopeptide (Lys-Gly) (interchain with G-Cter in SUMO2) cross-link involves residue lysine 687. ANK repeat units follow at residues 702 to 731 (FHPR…DPNF), 737 to 766 (SKRT…NINA), 770 to 799 (QQRT…CVYS), 803 to 833 (DGST…DVNA), 837 to 866 (GGWT…DVTL), 870 to 899 (EENI…DLHA), and 903 to 932 (HGDT…NPEL). Residues 870–872 (EEN) form a histone H3K9me binding region. In terms of domain architecture, Pre-SET spans 1025 to 1088 (QHCTCVDDCS…SCKNRVVQSG (64 aa)). Positions 1027, 1029, 1033, 1038, 1040, 1070, 1074, 1076, and 1080 each coordinate Zn(2+). The SET domain occupies 1091–1208 (VRLQLYRTAK…TGEELGFDYG (118 aa)). Residues 1101–1103 (MGW), tyrosine 1138, and 1165–1166 (NH) contribute to the S-adenosyl-L-methionine site. Residues 1127–1146 (DAEADVREDDSYLFDLDNKD) are interaction with histone H3. A Zn(2+)-binding site is contributed by cysteine 1168. The interval 1207–1210 (YGDR) is interaction with histone H3. The Post-SET domain maps to 1217 to 1233 (KYFTCQCGSEKCKHSAE). Zn(2+) is bound by residues cysteine 1221, cysteine 1223, and cysteine 1228. Serine 1257 carries the phosphoserine modification. Threonine 1263 bears the Phosphothreonine mark.

This sequence belongs to the class V-like SAM-binding methyltransferase superfamily. Histone-lysine methyltransferase family. Suvar3-9 subfamily. In terms of assembly, heterodimer; heterodimerizes with EHMT1/GLP. Interacts with GFI1B and WIZ. Part of the E2F6.com-1 complex in G0 phase composed of E2F6, MGA, MAX, TFDP1, CBX3, BAT8, EHMT1, RING1, RNF2, MBLR, L3MBTL2 and YAF2. Part of a complex composed of TRIM28, HDAC1, HDAC2 and EHMT2. Interacts with UHRF1. Interacts with CDYL. Interacts with REST only in the presence of CDYL. Part of a complex containing at least CDYL, REST, WIZ, SETB1, EHMT1 and EHMT2. Interacts with PRDM9 and CDYL; interaction only takes place when PRDM9 is bound to hotspot DNA. Interacts with SMYD5. In terms of processing, methylated at Lys-239; automethylated. Ubiquitous.

It is found in the nucleus. The protein localises to the chromosome. The enzyme catalyses N(6)-methyl-L-lysyl(9)-[histone H3] + S-adenosyl-L-methionine = N(6),N(6)-dimethyl-L-lysyl(9)-[histone H3] + S-adenosyl-L-homocysteine + H(+). It carries out the reaction L-lysyl(9)-[histone H3] + S-adenosyl-L-methionine = N(6)-methyl-L-lysyl(9)-[histone H3] + S-adenosyl-L-homocysteine + H(+). In terms of biological role, histone methyltransferase that specifically mono- and dimethylates 'Lys-9' of histone H3 (H3K9me1 and H3K9me2, respectively) in euchromatin. H3K9me represents a specific tag for epigenetic transcriptional repression by recruiting HP1 proteins to methylated histones. Also mediates monomethylation of 'Lys-56' of histone H3 (H3K56me1) in G1 phase, leading to promote interaction between histone H3 and PCNA and regulating DNA replication. Also weakly methylates 'Lys-27' of histone H3 (H3K27me). Also required for DNA methylation, the histone methyltransferase activity is not required for DNA methylation, suggesting that these 2 activities function independently. Probably targeted to histone H3 by different DNA-binding proteins like E2F6, MGA, MAX and/or DP1. May also methylate histone H1. In addition to the histone methyltransferase activity, also methylates non-histone proteins: mediates dimethylation of 'Lys-373' of p53/TP53. Also methylates CDYL, WIZ, ACIN1, DNMT1, HDAC1, ERCC6, KLF12 and itself. The sequence is that of Histone-lysine N-methyltransferase EHMT2 (Ehmt2) from Mus musculus (Mouse).